Here is a 345-residue protein sequence, read N- to C-terminus: 4-hydroxyproline 2-epimerase 1 (345 aa).

Q85 is a substrate binding site. Residue S93 is the Proton acceptor of the active site. Substrate is bound by residues 94–95 and D251; that span reads GS. The Proton donor role is filled by C255. Substrate is bound at residue 256-257; it reads GT.

This sequence belongs to the proline racemase family.

It catalyses the reaction trans-4-hydroxy-L-proline = cis-4-hydroxy-D-proline. Functionally, catalyzes the epimerization of trans-4-hydroxy-L-proline (t4LHyp) to cis-4-hydroxy-D-proline (c4DHyp). May be involved in a degradation pathway of t4LHyp. Can also catalyze the epimerization of trans-3-hydroxy-L-proline (t3LHyp) to cis-3-hydroxy-D-proline (c3DHyp) in vitro. Displays no proline racemase activity. This is 4-hydroxyproline 2-epimerase 1 from Rhizobium rhizogenes (strain K84 / ATCC BAA-868) (Agrobacterium radiobacter).